The primary structure comprises 161 residues: Phosphopantetheine adenylyltransferase (161 aa).

Serine 9 provides a ligand contact to substrate. ATP contacts are provided by residues 9-10 (SF) and histidine 17. Residues lysine 41, threonine 73, and arginine 87 each coordinate substrate. ATP-binding positions include 88–90 (GLR), glutamate 98, and 123–129 (FAHISST).

This sequence belongs to the bacterial CoaD family. As to quaternary structure, homohexamer. Mg(2+) is required as a cofactor.

The protein localises to the cytoplasm. It catalyses the reaction (R)-4'-phosphopantetheine + ATP + H(+) = 3'-dephospho-CoA + diphosphate. The protein operates within cofactor biosynthesis; coenzyme A biosynthesis; CoA from (R)-pantothenate: step 4/5. Its function is as follows. Reversibly transfers an adenylyl group from ATP to 4'-phosphopantetheine, yielding dephospho-CoA (dPCoA) and pyrophosphate. The chain is Phosphopantetheine adenylyltransferase from Chloroflexus aggregans (strain MD-66 / DSM 9485).